We begin with the raw amino-acid sequence, 593 residues long: Probable ubiquitin carboxyl-terminal hydrolase 4 (593 aa).

Residues 227–573 (IGLTNLGNTC…SSYILFYKRS (347 aa)) form the USP domain. The active-site Nucleophile is the cysteine 236. Phosphoserine occurs at positions 338 and 343. The active-site Proton acceptor is the histidine 530.

Belongs to the peptidase C19 family. Interacts with sfp47.

It is found in the cytoplasm. The protein localises to the endosome. It catalyses the reaction Thiol-dependent hydrolysis of ester, thioester, amide, peptide and isopeptide bonds formed by the C-terminal Gly of ubiquitin (a 76-residue protein attached to proteins as an intracellular targeting signal).. Functionally, has an ATP-independent isopeptidase activity, cleaving at the C-terminus of the ubiquitin moiety. Acts late in the proteolytic pathway in conjunction with the 26S proteasome. Plays a role in avoiding DNA overreplication. The polypeptide is Probable ubiquitin carboxyl-terminal hydrolase 4 (ubp4) (Schizosaccharomyces pombe (strain 972 / ATCC 24843) (Fission yeast)).